We begin with the raw amino-acid sequence, 578 residues long: MANAGVNETVAVAVAIDAPGVGHDHGAAGEVRRPSTRRLAPAGSGGRLMAELLGVFNGLTERMGEDVATSSSSRLLFRALKLALPALRDGGGDGGGGQSVSRALVVAASLADLQMDAEVISAGMVRGALDTGALAMADVEAQLGASAAGLVEESLKVKRAPSEVDVADEEAASALRKRCLSSYDIRAVILELAVKLDAMKHLDVLPKHQQRTTSLEVLKVFALLAHAVGAGELSLELEDLSFQRLYPQAYAHIDQWLSSQEDDCKRVIAASKEELLRALTADDELRCTVTGVDVMGRYKSRFSTMKKLVKDGRRPEDVNDILGMRVILDPRPGGGGGGDGDGGDRACLRTHEVIKAMWKDVPARTKDYITRPKGNGYRSLHVAVDMSEPGPEGKKRPLMEIQVRTREMDMAAVGGQASHALYKGGLTDPEEAKRLKAIMLAAAEVAAQHLRDEPAGDGGQTTAAASAATAGNVERAFQLLDKNGDGRISMEELTEIMEDLGAGGHDAEELMRLLDANSDGSLSSDEFALFQKRVKLKTKLENKDDEYKEILKQKLQKVDDTGLIHVYRKNLSDKLVLV.

The transit peptide at 1–45 (MANAGVNETVAVAVAIDAPGVGHDHGAAGEVRRPSTRRLAPAGSG) directs the protein to the chloroplast. The region spanning 99 to 199 (SVSRALVVAA…LELAVKLDAM (101 aa)) is the HD domain. EF-hand domains are found at residues 468-503 (ATAGNVERAFQLLDKNGDGRISMEELTEIMEDLGAG) and 506-537 (DAEELMRLLDANSDGSLSSDEFALFQKRVKLK). Ca(2+) is bound by residues Asp481, Asn483, Asp485, Arg487, Glu492, Asp515, Asn517, Asp519, Ser521, and Glu526.

Belongs to the RelA/SpoT family. As to expression, expressed in roots and shoots.

The protein localises to the plastid. It localises to the chloroplast. The catalysed reaction is GTP + ATP = guanosine 3'-diphosphate 5'-triphosphate + AMP. With respect to regulation, activated by calcium. Functionally, possesses calcium-dependent ppGpp (guanosine 3'-diphosphate 5'-diphosphate) synthetase activity in vitro and is able to functionally complement E.coli relA mutants. May be involved in a rapid plant ppGpp-mediated response to pathogens and other stresses. The chain is GTP diphosphokinase CRSH3, chloroplastic from Oryza sativa subsp. japonica (Rice).